The sequence spans 179 residues: NAD(P)H-quinone oxidoreductase subunit I, chloroplastic (179 aa).

2 4Fe-4S ferredoxin-type domains span residues 55–84 (GRIH…VDWR) and 95–124 (LNYS…MTEE). Cys64, Cys67, Cys70, Cys74, Cys104, Cys107, Cys110, and Cys114 together coordinate [4Fe-4S] cluster.

Belongs to the complex I 23 kDa subunit family. As to quaternary structure, NDH is composed of at least 16 different subunits, 5 of which are encoded in the nucleus. Requires [4Fe-4S] cluster as cofactor.

It localises to the plastid. It is found in the chloroplast thylakoid membrane. It carries out the reaction a plastoquinone + NADH + (n+1) H(+)(in) = a plastoquinol + NAD(+) + n H(+)(out). The enzyme catalyses a plastoquinone + NADPH + (n+1) H(+)(in) = a plastoquinol + NADP(+) + n H(+)(out). Functionally, NDH shuttles electrons from NAD(P)H:plastoquinone, via FMN and iron-sulfur (Fe-S) centers, to quinones in the photosynthetic chain and possibly in a chloroplast respiratory chain. The immediate electron acceptor for the enzyme in this species is believed to be plastoquinone. Couples the redox reaction to proton translocation, and thus conserves the redox energy in a proton gradient. The polypeptide is NAD(P)H-quinone oxidoreductase subunit I, chloroplastic (Acorus calamus (Sweet flag)).